Reading from the N-terminus, the 368-residue chain is Histidinol-phosphate aminotransferase (368 aa).

Lys-223 is modified (N6-(pyridoxal phosphate)lysine).

This sequence belongs to the class-II pyridoxal-phosphate-dependent aminotransferase family. Histidinol-phosphate aminotransferase subfamily. Homodimer. Pyridoxal 5'-phosphate is required as a cofactor.

The catalysed reaction is L-histidinol phosphate + 2-oxoglutarate = 3-(imidazol-4-yl)-2-oxopropyl phosphate + L-glutamate. It participates in amino-acid biosynthesis; L-histidine biosynthesis; L-histidine from 5-phospho-alpha-D-ribose 1-diphosphate: step 7/9. In Sinorhizobium fredii (strain NBRC 101917 / NGR234), this protein is Histidinol-phosphate aminotransferase (hisC).